Reading from the N-terminus, the 689-residue chain is DNA ligase (689 aa).

Residues 32-36, 81-82, and glutamate 113 contribute to the NAD(+) site; these read DAEYD and SL. The active-site N6-AMP-lysine intermediate is lysine 115. Residues arginine 136, glutamate 176, lysine 306, and lysine 330 each contribute to the NAD(+) site. Zn(2+)-binding residues include cysteine 424, cysteine 427, cysteine 442, and cysteine 448. A BRCT domain is found at 606–689; sequence AEELPLAEQI…ALLAEHGITI (84 aa).

It belongs to the NAD-dependent DNA ligase family. LigA subfamily. Requires Mg(2+) as cofactor. Mn(2+) serves as cofactor.

The catalysed reaction is NAD(+) + (deoxyribonucleotide)n-3'-hydroxyl + 5'-phospho-(deoxyribonucleotide)m = (deoxyribonucleotide)n+m + AMP + beta-nicotinamide D-nucleotide.. Functionally, DNA ligase that catalyzes the formation of phosphodiester linkages between 5'-phosphoryl and 3'-hydroxyl groups in double-stranded DNA using NAD as a coenzyme and as the energy source for the reaction. It is essential for DNA replication and repair of damaged DNA. This chain is DNA ligase, found in Colwellia psychrerythraea (strain 34H / ATCC BAA-681) (Vibrio psychroerythus).